The sequence spans 225 residues: Putative elongation factor 1 gamma homolog (225 aa).

One can recognise a GST C-terminal domain in the interval 94–225; the sequence is DFKTRADILR…MCETEMQPIK (132 aa).

The sequence is that of Putative elongation factor 1 gamma homolog from Saccharomyces cerevisiae (strain ATCC 204508 / S288c) (Baker's yeast).